A 111-amino-acid chain; its full sequence is Nucleoid-associated protein VF_1686 (111 aa).

Disordered regions lie at residues 1-23 (MFGG…DRMQ) and 89-111 (TQKE…KMPF).

Belongs to the YbaB/EbfC family. As to quaternary structure, homodimer.

Its subcellular location is the cytoplasm. It is found in the nucleoid. Binds to DNA and alters its conformation. May be involved in regulation of gene expression, nucleoid organization and DNA protection. The protein is Nucleoid-associated protein VF_1686 of Aliivibrio fischeri (strain ATCC 700601 / ES114) (Vibrio fischeri).